The chain runs to 345 residues: Biotin synthase (345 aa).

The Radical SAM core domain maps to 60-287; sequence NQVQLSTLLS…RTMVRLSAGR (228 aa). [4Fe-4S] cluster is bound by residues Cys-75, Cys-79, and Cys-82. [2Fe-2S] cluster-binding residues include Cys-119, Cys-150, Cys-210, and Arg-282.

It belongs to the radical SAM superfamily. Biotin synthase family. In terms of assembly, homodimer. The cofactor is [4Fe-4S] cluster. Requires [2Fe-2S] cluster as cofactor.

The catalysed reaction is (4R,5S)-dethiobiotin + (sulfur carrier)-SH + 2 reduced [2Fe-2S]-[ferredoxin] + 2 S-adenosyl-L-methionine = (sulfur carrier)-H + biotin + 2 5'-deoxyadenosine + 2 L-methionine + 2 oxidized [2Fe-2S]-[ferredoxin]. Its pathway is cofactor biosynthesis; biotin biosynthesis; biotin from 7,8-diaminononanoate: step 2/2. In terms of biological role, catalyzes the conversion of dethiobiotin (DTB) to biotin by the insertion of a sulfur atom into dethiobiotin via a radical-based mechanism. The protein is Biotin synthase of Polaromonas naphthalenivorans (strain CJ2).